We begin with the raw amino-acid sequence, 418 residues long: UDP-N-acetylglucosamine 1-carboxyvinyltransferase (418 aa).

22–23 (KN) provides a ligand contact to phosphoenolpyruvate. Arg92 provides a ligand contact to UDP-N-acetyl-alpha-D-glucosamine. Cys116 acts as the Proton donor in catalysis. The residue at position 116 (Cys116) is a 2-(S-cysteinyl)pyruvic acid O-phosphothioketal. The UDP-N-acetyl-alpha-D-glucosamine site is built by Asp305 and Ile327.

It belongs to the EPSP synthase family. MurA subfamily.

It localises to the cytoplasm. The enzyme catalyses phosphoenolpyruvate + UDP-N-acetyl-alpha-D-glucosamine = UDP-N-acetyl-3-O-(1-carboxyvinyl)-alpha-D-glucosamine + phosphate. The protein operates within cell wall biogenesis; peptidoglycan biosynthesis. Its function is as follows. Cell wall formation. Adds enolpyruvyl to UDP-N-acetylglucosamine. The chain is UDP-N-acetylglucosamine 1-carboxyvinyltransferase from Gluconobacter oxydans (strain 621H) (Gluconobacter suboxydans).